Consider the following 378-residue polypeptide: Beta-1,3-N-acetylglucosaminyltransferase lunatic fringe (378 aa).

Topologically, residues 1 to 8 (MLQRCGRR) are cytoplasmic. A helical; Signal-anchor for type II membrane protein transmembrane segment spans residues 9-29 (LLLALVGALLACLLVLTADPP). Residues 30–378 (PTPMPAERGR…TPWCPRSAIF (349 aa)) lie on the Lumenal side of the membrane. Positions 85–108 (RDADPPPGVASRQGDGHPRPPAEV) are disordered. R128 provides a ligand contact to substrate. Residue N166 is glycosylated (N-linked (GlcNAc...) asparagine). 2 cysteine pairs are disulfide-bonded: C167–C178 and C196–C259. A substrate-binding site is contributed by D200. D201 provides a ligand contact to Mn(2+). Residue D289 is part of the active site. H313 lines the Mn(2+) pocket. A disulfide bridge connects residues C363 and C372.

This sequence belongs to the glycosyltransferase 31 family. Mn(2+) serves as cofactor. Co(2+) is required as a cofactor. Post-translationally, a soluble form may be derived from the membrane form by proteolytic processing. In terms of tissue distribution, detected at 12.5 dpc in all tissues examined with the highest level observed in adult brain and spleen. Detected in the dental epithelium.

The protein localises to the golgi apparatus. It localises to the golgi apparatus membrane. The catalysed reaction is 3-O-(alpha-L-fucosyl)-L-threonyl-[EGF-like domain protein] + UDP-N-acetyl-alpha-D-glucosamine = 3-O-(N-acetyl-beta-D-glucosaminyl-(1-&gt;3)-alpha-L-fucosyl)-L-threonyl-[EGF-like domain protein] + UDP + H(+). It carries out the reaction 3-O-(alpha-L-fucosyl)-L-seryl-[EGF-like domain protein] + UDP-N-acetyl-alpha-D-glucosamine = 3-O-(N-acetyl-beta-D-glucosaminyl-(1-&gt;3)-alpha-L-fucosyl)-L-seryl-[EGF-like domain protein] + UDP + H(+). Its function is as follows. Glycosyltransferase that initiates the elongation of O-linked fucose residues attached to EGF-like repeats in the extracellular domain of Notch molecules. Modulates NOTCH1 activity by modifying O-fucose residues at specific EGF-like domains resulting in inhibition of NOTCH1 activation by JAG1 and enhancement of NOTCH1 activation by DLL1 via an increase in its binding to DLL1. Decreases the binding of JAG1 to NOTCH2 but not that of DLL1. Essential mediator of somite segmentation and patterning. During somite boundary formation, it restricts Notch activity in the presomitic mesoderm to a boundary-forming territory in the posterior half of the prospective somite. In this region, Notch function activates a set of genes that are involved in boundary formation and in anterior-posterior somite identity. Ectopically expressed in the thymus, Lfgn inhibits Notch signaling which results in inhibition of T-cell commitment and promotes B-cell development in lymphoid progenitors. May play a role in boundary formation of the enamel knot. The polypeptide is Beta-1,3-N-acetylglucosaminyltransferase lunatic fringe (Mus musculus (Mouse)).